A 135-amino-acid chain; its full sequence is MAKIVRFGVSIEEDLLENFDKIIEDKGYNSRSEAIRDLIRDYIIKEKWNLKKEKVAGSISLIYEHDVYGLSEKLTDIQHHYHDVIISTLHVHLDEKNCMEVILVRGKVEKIKRLYDELSSLKWVRHTNIAITDII.

Ni(2+) is bound by residues His-79, His-90, His-92, and Cys-98.

It belongs to the transcriptional regulatory CopG/NikR family. Ni(2+) serves as cofactor.

Functionally, transcriptional regulator. The sequence is that of Putative nickel-responsive regulator from Dictyoglomus turgidum (strain DSM 6724 / Z-1310).